Reading from the N-terminus, the 504-residue chain is Maturase K (504 aa).

It belongs to the intron maturase 2 family. MatK subfamily.

The protein localises to the plastid. The protein resides in the chloroplast. Usually encoded in the trnK tRNA gene intron. Probably assists in splicing its own and other chloroplast group II introns. The protein is Maturase K of Aruncus dioicus (Goat's beard).